Reading from the N-terminus, the 507-residue chain is Alkyl hydroperoxide reductase subunit F (507 aa).

207 to 222 lines the FAD pocket; sequence DVLIVGGGPASGSAAI. The cysteines at positions 335 and 338 are disulfide-linked. 347–361 provides a ligand contact to NAD(+); it reads DVAVIGGGNSGVEAA. 467–477 lines the FAD pocket; it reads TNVPGIFAAGD.

It belongs to the class-II pyridine nucleotide-disulfide oxidoreductase family. As to quaternary structure, homodimer. FAD is required as a cofactor.

Its function is as follows. Serves to protect the cell against DNA damage by alkyl hydroperoxides. It can use either NADH or NADPH as electron donor for direct reduction of redox dyes or of alkyl hydroperoxides when combined with the AhpC protein. In Staphylococcus epidermidis (strain ATCC 35984 / DSM 28319 / BCRC 17069 / CCUG 31568 / BM 3577 / RP62A), this protein is Alkyl hydroperoxide reductase subunit F (ahpF).